We begin with the raw amino-acid sequence, 713 residues long: Ribosomal RNA large subunit methyltransferase K/L (713 aa).

One can recognise a THUMP domain in the interval 46–157 (TAYRICLWSR…RDQATLSLDL (112 aa)).

Belongs to the methyltransferase superfamily. RlmKL family.

Its subcellular location is the cytoplasm. It catalyses the reaction guanosine(2445) in 23S rRNA + S-adenosyl-L-methionine = N(2)-methylguanosine(2445) in 23S rRNA + S-adenosyl-L-homocysteine + H(+). The enzyme catalyses guanosine(2069) in 23S rRNA + S-adenosyl-L-methionine = N(2)-methylguanosine(2069) in 23S rRNA + S-adenosyl-L-homocysteine + H(+). Its function is as follows. Specifically methylates the guanine in position 2445 (m2G2445) and the guanine in position 2069 (m7G2069) of 23S rRNA. In Syntrophotalea carbinolica (strain DSM 2380 / NBRC 103641 / GraBd1) (Pelobacter carbinolicus), this protein is Ribosomal RNA large subunit methyltransferase K/L.